The primary structure comprises 102 residues: Putative pterin-4-alpha-carbinolamine dehydratase (102 aa).

It belongs to the pterin-4-alpha-carbinolamine dehydratase family.

It carries out the reaction (4aS,6R)-4a-hydroxy-L-erythro-5,6,7,8-tetrahydrobiopterin = (6R)-L-erythro-6,7-dihydrobiopterin + H2O. This chain is Putative pterin-4-alpha-carbinolamine dehydratase, found in Burkholderia cenocepacia (strain ATCC BAA-245 / DSM 16553 / LMG 16656 / NCTC 13227 / J2315 / CF5610) (Burkholderia cepacia (strain J2315)).